Reading from the N-terminus, the 332-residue chain is GTP 3',8-cyclase (332 aa).

The Radical SAM core domain occupies 7–221 (SYDRLHDYVR…FDTCKDNGLA (215 aa)). Arg-16 provides a ligand contact to GTP. [4Fe-4S] cluster contacts are provided by Cys-23 and Cys-27. An S-adenosyl-L-methionine-binding site is contributed by Tyr-29. A [4Fe-4S] cluster-binding site is contributed by Cys-30. Arg-66 is a GTP binding site. Gly-70 serves as a coordination point for S-adenosyl-L-methionine. A GTP-binding site is contributed by Thr-97. Residue Ser-121 coordinates S-adenosyl-L-methionine. Lys-158 serves as a coordination point for GTP. Met-192 lines the S-adenosyl-L-methionine pocket. Cys-256 and Cys-259 together coordinate [4Fe-4S] cluster. 261–263 (RLR) is a GTP binding site. Cys-273 is a [4Fe-4S] cluster binding site.

The protein belongs to the radical SAM superfamily. MoaA family. In terms of assembly, monomer and homodimer. [4Fe-4S] cluster serves as cofactor.

The catalysed reaction is GTP + AH2 + S-adenosyl-L-methionine = (8S)-3',8-cyclo-7,8-dihydroguanosine 5'-triphosphate + 5'-deoxyadenosine + L-methionine + A + H(+). The protein operates within cofactor biosynthesis; molybdopterin biosynthesis. Functionally, catalyzes the cyclization of GTP to (8S)-3',8-cyclo-7,8-dihydroguanosine 5'-triphosphate. The polypeptide is GTP 3',8-cyclase (Lactiplantibacillus plantarum (strain ATCC BAA-793 / NCIMB 8826 / WCFS1) (Lactobacillus plantarum)).